The chain runs to 625 residues: Complex I assembly factor ACAD9, mitochondrial (625 aa).

The transit peptide at 1-41 (MSGYVLFSRGATAAAAAARASRVLRVFTERRRTLHTSLQSC) directs the protein to the mitochondrion. Lys45 is modified (N6-acetyllysine). Position 96 is an N6-succinyllysine (Lys96). Glu430 serves as the catalytic Proton acceptor. A Phosphothreonine modification is found at Thr482. Lys525 is subject to N6-acetyllysine; alternate. Lys525 bears the N6-succinyllysine; alternate mark.

It belongs to the acyl-CoA dehydrogenase family. Homodimer. Interacts with NDUFAF1 and ECSIT. Part of the mitochondrial complex I assembly/MCIA complex that comprises at least the core subunits TMEM126B, NDUFAF1, ECSIT and ACAD9 and complement subunits such as COA1 and TMEM186. Interacts with TMEM70 and TMEM242. The cofactor is FAD.

Its subcellular location is the mitochondrion inner membrane. It carries out the reaction eicosanoyl-CoA + oxidized [electron-transfer flavoprotein] + H(+) = (2E)-eicosenoyl-CoA + reduced [electron-transfer flavoprotein]. It catalyses the reaction octadecanoyl-CoA + oxidized [electron-transfer flavoprotein] + H(+) = (2E)-octadecenoyl-CoA + reduced [electron-transfer flavoprotein]. The catalysed reaction is oxidized [electron-transfer flavoprotein] + hexadecanoyl-CoA + H(+) = (2E)-hexadecenoyl-CoA + reduced [electron-transfer flavoprotein]. The enzyme catalyses decanoyl-CoA + oxidized [electron-transfer flavoprotein] + H(+) = (2E)-decenoyl-CoA + reduced [electron-transfer flavoprotein]. It carries out the reaction nonanoyl-CoA + oxidized [electron-transfer flavoprotein] + H(+) = (2E)-nonenoyl-CoA + reduced [electron-transfer flavoprotein]. It catalyses the reaction pentadecanoyl-CoA + oxidized [electron-transfer flavoprotein] + H(+) = (2E)-pentadecenoyl-CoA + reduced [electron-transfer flavoprotein]. The catalysed reaction is undecanoyl-CoA + oxidized [electron-transfer flavoprotein] + H(+) = trans-2-undecenoyl-CoA + reduced [electron-transfer flavoprotein]. The enzyme catalyses (9Z)-hexadecenoyl-CoA + oxidized [electron-transfer flavoprotein] + H(+) = (2E,9Z)-hexadecadienoyl-CoA + reduced [electron-transfer flavoprotein]. It carries out the reaction heptadecanoyl-CoA + oxidized [electron-transfer flavoprotein] + H(+) = trans-2-heptadecenoyl-CoA + reduced [electron-transfer flavoprotein]. It catalyses the reaction (9E)-octadecenoyl-CoA + oxidized [electron-transfer flavoprotein] + H(+) = (2E,9E)-octadecadienoyl-CoA + reduced [electron-transfer flavoprotein]. The catalysed reaction is oxidized [electron-transfer flavoprotein] + (9Z)-octadecenoyl-CoA + H(+) = (2E,9Z)-octadecadienoyl-CoA + reduced [electron-transfer flavoprotein]. The enzyme catalyses (9Z,12Z)-octadecadienoyl-CoA + oxidized [electron-transfer flavoprotein] + H(+) = (2E,9Z,12Z)-octadecatrienoyl-CoA + reduced [electron-transfer flavoprotein]. It carries out the reaction (4Z,7Z,10Z,13Z,16Z,19Z)-docosahexaenoyl-CoA + oxidized [electron-transfer flavoprotein] + H(+) = (2E,4Z,7Z,10Z,13Z,16Z,19Z)-docosaheptaenoyl-CoA + reduced [electron-transfer flavoprotein]. It catalyses the reaction tetradecanoyl-CoA + oxidized [electron-transfer flavoprotein] + H(+) = (2E)-tetradecenoyl-CoA + reduced [electron-transfer flavoprotein]. Its function is as follows. As part of the MCIA complex, primarily participates in the assembly of the mitochondrial complex I and therefore plays a role in oxidative phosphorylation. This moonlighting protein also has a dehydrogenase activity toward a broad range of substrates with greater specificity for long-chain unsaturated acyl-CoAs. However, in vivo, it does not seem to play a primary role in fatty acid oxidation. In addition, the function in complex I assembly is independent of the dehydrogenase activity of the protein. The chain is Complex I assembly factor ACAD9, mitochondrial from Rattus norvegicus (Rat).